A 387-amino-acid chain; its full sequence is Guanylate kinase 1 (387 aa).

Residues 137–319 (EKPIVISGPS…CYKKLKNLLG (183 aa)) form the Guanylate kinase-like domain. Position 144–151 (144–151 (GPSGVGKG)) interacts with ATP. Catalysis depends on residues Arg-177, Arg-270, and Arg-281. Residues Asn-304 and Asp-305 each contribute to the ATP site.

It belongs to the guanylate kinase family. As to quaternary structure, monomer.

It carries out the reaction GMP + ATP = GDP + ADP. Essential for recycling GMP and indirectly, cGMP. Required for normal development of the gametophyte and embryo, in association with GK2. In Arabidopsis thaliana (Mouse-ear cress), this protein is Guanylate kinase 1 (GK-1).